The sequence spans 319 residues: MSLNFLDFEQPIAELEAKIDSLTAVSRQDEKLDINIDEEVHRLREKSVELTRKIFADLGAWQIAQLARHPQRPYTLDYVRLAFDEFDELAGDRAYADDKAIVGGIARLDGRPVMIIGHQKGRETKEKIRRNFGMPAPEGYRKALRLMEMAERFNMPIITFIDTPGAYPGVGAEERGQSEAIARNLREMSRLKVPVICTVIGEGGSGGALAIGVGDKVNMLQYSTYSVISPEGCASILWKSADKAPLAAEAMGIIAPRLKELKLIDSVIPEPLGGAHRNPEAMAQSLKTQLLADLADLDVLSKDDLLNRRYQRLMSYGYA.

The 262-residue stretch at 35–296 folds into the CoA carboxyltransferase C-terminal domain; it reads NIDEEVHRLR…KTQLLADLAD (262 aa).

The protein belongs to the AccA family. Acetyl-CoA carboxylase is a heterohexamer composed of biotin carboxyl carrier protein (AccB), biotin carboxylase (AccC) and two subunits each of ACCase subunit alpha (AccA) and ACCase subunit beta (AccD).

It localises to the cytoplasm. The catalysed reaction is N(6)-carboxybiotinyl-L-lysyl-[protein] + acetyl-CoA = N(6)-biotinyl-L-lysyl-[protein] + malonyl-CoA. Its pathway is lipid metabolism; malonyl-CoA biosynthesis; malonyl-CoA from acetyl-CoA: step 1/1. Functionally, component of the acetyl coenzyme A carboxylase (ACC) complex. First, biotin carboxylase catalyzes the carboxylation of biotin on its carrier protein (BCCP) and then the CO(2) group is transferred by the carboxyltransferase to acetyl-CoA to form malonyl-CoA. The chain is Acetyl-coenzyme A carboxylase carboxyl transferase subunit alpha from Cronobacter sakazakii (strain ATCC BAA-894) (Enterobacter sakazakii).